The chain runs to 181 residues: MPKGCLVITVSGLAGSGTTTLCRNLAKHYGFKHVYAGLIFRQMAKERGMSLEEFQKYAELHPEIDREVDRRQVEAAKECNVVIEGRLAGWMVKNADLKIWLDAPIRVRAERVAKREGISVEEAFMKIAEREMQNRKRYLNLYGIDINDLSIYDLIIDTSKWSPEGVFAIVKAAIDHLYEKV.

Residue 12–20 (GLAGSGTTT) coordinates ATP.

It belongs to the cytidylate kinase family. Type 2 subfamily.

The protein localises to the cytoplasm. It carries out the reaction CMP + ATP = CDP + ADP. It catalyses the reaction dCMP + ATP = dCDP + ADP. The polypeptide is Cytidylate kinase (cmk) (Pyrococcus abyssi (strain GE5 / Orsay)).